The following is a 367-amino-acid chain: Chorismate synthase (367 aa).

Arginine 48 contributes to the NADP(+) binding site. FMN is bound by residues 125–127 (RSS), glycine 284, 299–303 (KPTPS), and arginine 325.

The protein belongs to the chorismate synthase family. As to quaternary structure, homotetramer. FMNH2 serves as cofactor.

The catalysed reaction is 5-O-(1-carboxyvinyl)-3-phosphoshikimate = chorismate + phosphate. Its pathway is metabolic intermediate biosynthesis; chorismate biosynthesis; chorismate from D-erythrose 4-phosphate and phosphoenolpyruvate: step 7/7. In terms of biological role, catalyzes the anti-1,4-elimination of the C-3 phosphate and the C-6 proR hydrogen from 5-enolpyruvylshikimate-3-phosphate (EPSP) to yield chorismate, which is the branch point compound that serves as the starting substrate for the three terminal pathways of aromatic amino acid biosynthesis. This reaction introduces a second double bond into the aromatic ring system. This Lachnoclostridium phytofermentans (strain ATCC 700394 / DSM 18823 / ISDg) (Clostridium phytofermentans) protein is Chorismate synthase.